The primary structure comprises 598 residues: Peroxisomal targeting signal receptor (598 aa).

Disordered regions lie at residues 1–54 (MSFM…GEMS), 135–154 (RGGSPAEAMQQQGPGPMQGG), and 208–237 (AVGKGKEVEEQTAETATATETVTETETTTE). A compositionally biased stretch (polar residues) spans 9-22 (ECSTGRNPLSQFTK). Cys-10 participates in a covalent cross-link: Glycyl cysteine thioester (Cys-Gly) (interchain with G-Cter in ubiquitin). A Glycyl lysine isopeptide (Lys-Gly) (interchain with G-Cter in ubiquitin) cross-link involves residue Lys-22. Over residues 23 to 35 (HTAEDRSLQHDRV) the composition is skewed to basic and acidic residues. A compositionally biased stretch (low complexity) spans 220–233 (AETATATETVTETE). TPR repeat units lie at residues 304–337 (PDPFKIGVELMETGGRLSEAALAFEAAVQKNTEH), 338–371 (AEAWGRLGACQAQNEKEDPAIRALERCIKLEPGN), 372–409 (LSALMNLSVSYTNEGYENAAYATLERWLATKYPEVVDQ), 410–447 (ARNQEPRLGNEDKFQLHSRVTELFIRAAQLSPDGANID), 448–481 (ADVQVGLGVLFYGNEEYDKAIDCFNAAIAVRPDD), 482–515 (ALLWNRLGATLANSHRSEEAIDAYYKALELRPSF), and 516–549 (VRARYNLGVSCINIGCYKEAAQYLLGALSMHKVE).

This sequence belongs to the peroxisomal targeting signal receptor family. Ubiquitination at Cys-10 is UBC4-independent but requires the presence of PEX4. Ubiquitination at Lys-22 is UBC4-dependent.

Its subcellular location is the cytoplasm. It is found in the peroxisome membrane. Functionally, binds to the C-terminal PTS1-type tripeptide peroxisomal targeting signal (SKL-type) and plays an essential role in peroxisomal protein import. This Yarrowia lipolytica (strain CLIB 122 / E 150) (Yeast) protein is Peroxisomal targeting signal receptor (PAY32).